A 273-amino-acid chain; its full sequence is Beta-lactamase OXA-133 (273 aa).

The first 17 residues, 1–17 (MNKYFTCYVVASLFFSG), serve as a signal peptide directing secretion. The N-palmitoyl cysteine moiety is linked to residue cysteine 18. Cysteine 18 carries the S-diacylglycerol cysteine lipid modification. Serine 79 acts as the Acyl-ester intermediate in catalysis. Lysine 82 carries the N6-carboxylysine modification. 216-218 (KTG) provides a ligand contact to substrate.

Belongs to the class-D beta-lactamase family.

Its subcellular location is the cell membrane. The enzyme catalyses a beta-lactam + H2O = a substituted beta-amino acid. In terms of biological role, catalyzes the hydrolysis of beta-lactam antibiotics. This chain is Beta-lactamase OXA-133, found in Acinetobacter radioresistens.